The sequence spans 227 residues: Urease accessory protein UreF (227 aa).

It belongs to the UreF family. In terms of assembly, ureD, UreF and UreG form a complex that acts as a GTP-hydrolysis-dependent molecular chaperone, activating the urease apoprotein by helping to assemble the nickel containing metallocenter of UreC. The UreE protein probably delivers the nickel.

The protein localises to the cytoplasm. Its function is as follows. Required for maturation of urease via the functional incorporation of the urease nickel metallocenter. The polypeptide is Urease accessory protein UreF (Bacillus sp. (strain TB-90)).